A 279-amino-acid polypeptide reads, in one-letter code: Orotidine 5'-phosphate decarboxylase (279 aa).

Substrate-binding positions include D8, K30, D58–T67, T117, R177, Q186, G206, and R207. K60 serves as the catalytic Proton donor.

This sequence belongs to the OMP decarboxylase family. Type 1 subfamily. Homodimer.

The enzyme catalyses orotidine 5'-phosphate + H(+) = UMP + CO2. It functions in the pathway pyrimidine metabolism; UMP biosynthesis via de novo pathway; UMP from orotate: step 2/2. Its function is as follows. Catalyzes the decarboxylation of orotidine 5'-monophosphate (OMP) to uridine 5'-monophosphate (UMP). The chain is Orotidine 5'-phosphate decarboxylase from Campylobacter jejuni subsp. jejuni serotype O:2 (strain ATCC 700819 / NCTC 11168).